We begin with the raw amino-acid sequence, 263 residues long: MGIYMRDDILDIITLTTDFGTNEGYVGAMKGRILNILKKYNKDAKIIDISHEIKPFNIYHGAYVLLTAIPYFPPSVHVAVIDPTVGSERKSIVIETKSGYYLVGPDNGLFTYVAEKLGIKRIIKIDEERYKPSSTFHGRDVYAVVGAEILINNGYDGEELDEMVKIDETKKRVIHIDRFGNIITNIKKDEVTFKYYDTIMIKIRHKNGIEKIIKCKFVKSYFEEKNNFICLINSEGFLEISKFMDNASKLLNVDYLDEIEIIY.

3 residues coordinate adenosine: Asp18, Asp82, and Asn181. The (R)-S-adenosyl-L-methionine site is built by Asn181, Tyr221, Ser234, Glu239, and Met244.

This sequence belongs to the SAM hydrolase / SAM-dependent halogenase family. Homotrimer.

The enzyme catalyses (R)-S-adenosyl-L-methionine + H2O = adenosine + L-methionine + H(+). Catalyzes the hydrolysis of S-adenosyl-L-methionine (SAM) into adenosine and L-methionine. Does not have chlorinase or fluorinase activity. The sequence is that of (R)-S-adenosyl-L-methionine hydrolase from Methanocaldococcus jannaschii (strain ATCC 43067 / DSM 2661 / JAL-1 / JCM 10045 / NBRC 100440) (Methanococcus jannaschii).